Reading from the N-terminus, the 470-residue chain is Asparagine--tRNA ligase (470 aa).

Belongs to the class-II aminoacyl-tRNA synthetase family. As to quaternary structure, homodimer.

Its subcellular location is the cytoplasm. It catalyses the reaction tRNA(Asn) + L-asparagine + ATP = L-asparaginyl-tRNA(Asn) + AMP + diphosphate + H(+). The polypeptide is Asparagine--tRNA ligase (Blochmanniella floridana).